Consider the following 377-residue polypeptide: GDSL esterase/lipase 4 (377 aa).

The N-terminal stretch at 1–21 is a signal peptide; that stretch reads MASPRFNSIIIILFICTISLS. S44 acts as the Nucleophile in catalysis. 5 N-linked (GlcNAc...) asparagine glycosylation sites follow: N135, N188, N194, N207, and N241. Residues D342 and H345 contribute to the active site. An N-linked (GlcNAc...) asparagine glycan is attached at N364.

It belongs to the 'GDSL' lipolytic enzyme family.

The protein localises to the secreted. This Arabidopsis thaliana (Mouse-ear cress) protein is GDSL esterase/lipase 4 (GLIP4).